The sequence spans 232 residues: Putative N-acetylmannosamine-6-phosphate 2-epimerase (232 aa).

It belongs to the NanE family.

The catalysed reaction is an N-acyl-D-glucosamine 6-phosphate = an N-acyl-D-mannosamine 6-phosphate. It participates in amino-sugar metabolism; N-acetylneuraminate degradation; D-fructose 6-phosphate from N-acetylneuraminate: step 3/5. Functionally, converts N-acetylmannosamine-6-phosphate (ManNAc-6-P) to N-acetylglucosamine-6-phosphate (GlcNAc-6-P). The sequence is that of Putative N-acetylmannosamine-6-phosphate 2-epimerase from Borreliella burgdorferi (strain ZS7) (Borrelia burgdorferi).